Here is a 308-residue protein sequence, read N- to C-terminus: Spermidine synthase 2 (308 aa).

The PABS domain maps to 17–254; that stretch reads PGWFSEISPL…GVIGFMLCST (238 aa). Glutamine 48 is a binding site for S-adenosyl 3-(methylsulfanyl)propylamine. Tyrosine 78 contacts putrescine. Residues glutamine 79, aspartate 103, glutamate 123, 154–155, and aspartate 173 contribute to the S-adenosyl 3-(methylsulfanyl)propylamine site; that span reads DG. Aspartate 173 acts as the Proton acceptor in catalysis. Putrescine contacts are provided by residues 173-176 and tyrosine 242; that span reads DSSD.

It belongs to the spermidine/spermine synthase family.

It carries out the reaction S-adenosyl 3-(methylsulfanyl)propylamine + putrescine = S-methyl-5'-thioadenosine + spermidine + H(+). It functions in the pathway amine and polyamine biosynthesis; spermidine biosynthesis; spermidine from putrescine: step 1/1. The sequence is that of Spermidine synthase 2 from Hyoscyamus niger (Black henbane).